A 261-amino-acid polypeptide reads, in one-letter code: MQDTPLIIGSRSFQSRLLVGTGKYKDLNETDLAIQASGAEIVTVAIRRVNIGQNPDQPNLLSVIPPEKYTILPNTAGCFDADSAVRTCMLARELLDGHNLVKLEVLGDEKTLYPNVTETLKAARTLIDDGFEIMVYTSDDPIIAQELESMGCVAIMPLGSLIGSGLGILNPHTISIIKENAKVPVLVDAGVGTASDAAIAMELGCDGVLMNTAIAAAQNPILMASAMKKAVEAGREAFLAGRMPRKRMANASSPETGYFFK.

Lys102 functions as the Schiff-base intermediate with DXP in the catalytic mechanism. Residues Gly163, 189-190, and 211-212 contribute to the 1-deoxy-D-xylulose 5-phosphate site; these read AG and NT.

This sequence belongs to the ThiG family. As to quaternary structure, homotetramer. Forms heterodimers with either ThiH or ThiS.

The protein resides in the cytoplasm. It catalyses the reaction [ThiS sulfur-carrier protein]-C-terminal-Gly-aminoethanethioate + 2-iminoacetate + 1-deoxy-D-xylulose 5-phosphate = [ThiS sulfur-carrier protein]-C-terminal Gly-Gly + 2-[(2R,5Z)-2-carboxy-4-methylthiazol-5(2H)-ylidene]ethyl phosphate + 2 H2O + H(+). It participates in cofactor biosynthesis; thiamine diphosphate biosynthesis. Functionally, catalyzes the rearrangement of 1-deoxy-D-xylulose 5-phosphate (DXP) to produce the thiazole phosphate moiety of thiamine. Sulfur is provided by the thiocarboxylate moiety of the carrier protein ThiS. In vitro, sulfur can be provided by H(2)S. The protein is Thiazole synthase of Acinetobacter baumannii (strain AB307-0294).